A 284-amino-acid chain; its full sequence is Orotidine 5'-phosphate decarboxylase (284 aa).

Residues Asp-42, 64-66, 96-105, Tyr-237, and Arg-255 each bind substrate; these read KTH and DRKFADIGNT. Lys-98 acts as the Proton donor in catalysis.

Belongs to the OMP decarboxylase family.

It catalyses the reaction orotidine 5'-phosphate + H(+) = UMP + CO2. The protein operates within pyrimidine metabolism; UMP biosynthesis via de novo pathway; UMP from orotate: step 2/2. This Magnusiomyces magnusii (Yeast) protein is Orotidine 5'-phosphate decarboxylase (URA3).